A 141-amino-acid chain; its full sequence is Hemoglobin subunit alpha-A (141 aa).

The Globin domain occupies Val-1–Arg-141. His-58 is an O2 binding site. His-87 provides a ligand contact to heme b.

It belongs to the globin family. Heterotetramer of two alpha chains and two beta chains. Red blood cells.

Its function is as follows. Involved in oxygen transport from the lung to the various peripheral tissues. The chain is Hemoglobin subunit alpha-A (HBAA) from Struthio camelus (Common ostrich).